The sequence spans 469 residues: Glutamine synthetase (469 aa).

The GS beta-grasp domain occupies 14 to 98; the sequence is NDVKYVDLRF…VVCDVLEPTT (85 aa). One can recognise a GS catalytic domain in the interval 106-469; the sequence is PRGIAKKAMA…PVEFEMYYSV (364 aa). Mg(2+) is bound by residues glutamate 131 and glutamate 133. Residue glutamate 209 participates in ATP binding. Positions 214 and 221 each coordinate Mg(2+). Residues 265–266 and glycine 266 each bind L-glutamate; that span reads NG. Histidine 270 is a binding site for Mg(2+). ATP is bound by residues 272–274 and serine 274; that span reads HQS. The L-glutamate site is built by arginine 322, glutamate 328, and arginine 340. Arginine 340, arginine 345, and lysine 353 together coordinate ATP. Glutamate 358 lines the Mg(2+) pocket. L-glutamate is bound at residue arginine 360. Tyrosine 398 is modified (O-AMP-tyrosine).

The protein belongs to the glutamine synthetase family. Oligomer of 12 subunits arranged in the form of two hexameric ring. It depends on Mg(2+) as a cofactor.

The protein localises to the cytoplasm. It carries out the reaction L-glutamate + NH4(+) + ATP = L-glutamine + ADP + phosphate + H(+). Its activity is regulated as follows. The activity of this enzyme could be controlled by adenylation under conditions of abundant glutamine. Catalyzes the ATP-dependent biosynthesis of glutamine from glutamate and ammonia. The protein is Glutamine synthetase of Azorhizobium caulinodans (strain ATCC 43989 / DSM 5975 / JCM 20966 / LMG 6465 / NBRC 14845 / NCIMB 13405 / ORS 571).